The sequence spans 285 residues: MAVKILTDSTSCMNNDLINKFHINLVSLSVSFDDESFKEKDISNEVFYEKMNEKGIPKSSQPSIEDLCSVMEEVVSVGDELLCIFISSDMSGTYSTAHIARDMVIEKYKDAKIEILDSRSNCMQLGFAAISAARAAMDGKSLEEVKLAAEENMKKSRFLFIPDNLVYLKKGGRIGGAGALIGNLLKIIPILTVEDGKTSVFAKIRTKKRAVETMVQRVLEDTDKFGMGGIAVHHINCYDEAKRLAETIKNKFKVDPIICDIGPVIGLHVGPGAIGIAYYTEKNMR.

The region spanning 3-280 (VKILTDSTSC…PGAIGIAYYT (278 aa)) is the DegV domain. Residues Ser-59 and Ser-91 each contribute to the hexadecanoate site.

In terms of biological role, may bind long-chain fatty acids, such as palmitate, and may play a role in lipid transport or fatty acid metabolism. In Clostridium acetobutylicum (strain ATCC 824 / DSM 792 / JCM 1419 / IAM 19013 / LMG 5710 / NBRC 13948 / NRRL B-527 / VKM B-1787 / 2291 / W), this protein is DegV domain-containing protein CA_C3284.